The following is a 312-amino-acid chain: Photosystem I assembly protein Ycf4 (312 aa).

3 consecutive transmembrane segments (helical) span residues 42 to 62 (WAFI…SSYF), 91 to 111 (IILF…GLFL), and 113 to 133 (FYLW…IYIY).

The protein belongs to the Ycf4 family.

The protein resides in the plastid. It is found in the chloroplast thylakoid membrane. In terms of biological role, seems to be required for the assembly of the photosystem I complex. This is Photosystem I assembly protein Ycf4 from Pleurastrum terricola (Filamentous green alga).